A 248-amino-acid chain; its full sequence is MREMLQVERPKLILDDGKRTDGRKPDELRSIKIELGVLKNADGSAIFEMGNTKAIAAVYGPKEMHPRHLSLPDRAVLRVRYHMTPFSTDERKNPAPSRREIELSKVIREALESAVLVELFPRTAIDVFTEILQADAGSRLVSLMAASLALADAGIPMRDLIAGVAVGKADGVIILDLNETEDMWGEADMPIAMMPSLNQVTLFQLNGSMTPDEFRQAFDLAVKGINIIYNLEREALKSKYVEFKEEGV.

It belongs to the RNase PH family. Rrp41 subfamily. As to quaternary structure, component of the archaeal exosome complex. Forms a hexameric ring-like arrangement composed of 3 Rrp41-Rrp42 heterodimers. The hexameric ring associates with a trimer of Rrp4 and/or Csl4 subunits.

Its subcellular location is the cytoplasm. Catalytic component of the exosome, which is a complex involved in RNA degradation. Has 3'-&gt;5' exoribonuclease activity. Can also synthesize heteromeric RNA-tails. Binds RNA. The sequence is that of Exosome complex component Rrp41 from Saccharolobus solfataricus (strain ATCC 35092 / DSM 1617 / JCM 11322 / P2) (Sulfolobus solfataricus).